Consider the following 388-residue polypeptide: 2-epi-5-epi-valiolone synthase (388 aa).

Residues 92–95 (ERNK), 124–128 (GIVAD), 148–149 (TT), Lys-161, Lys-170, and 188–191 (LLAT) each bind NAD(+). Residues Glu-203, His-267, and His-283 each contribute to the Zn(2+) site.

This sequence belongs to the sugar phosphate cyclases superfamily. EEVS-like family. The cofactor is NAD(+). Requires Co(2+) as cofactor. It depends on Zn(2+) as a cofactor.

It carries out the reaction D-sedoheptulose 7-phosphate = 2-epi-5-epi-valiolone + phosphate. Catalyzes the cyclization of D-sedoheptulose 7-phosphate to 2-epi-5-epi-valiolone. Probably involved in acarbose biosynthesis. This is 2-epi-5-epi-valiolone synthase from Streptomyces glaucescens.